We begin with the raw amino-acid sequence, 127 residues long: Large ribosomal subunit protein bL12 (127 aa).

Belongs to the bacterial ribosomal protein bL12 family. Homodimer. Part of the ribosomal stalk of the 50S ribosomal subunit. Forms a multimeric L10(L12)X complex, where L10 forms an elongated spine to which 2 to 4 L12 dimers bind in a sequential fashion. Binds GTP-bound translation factors.

Forms part of the ribosomal stalk which helps the ribosome interact with GTP-bound translation factors. Is thus essential for accurate translation. This Bordetella bronchiseptica (strain ATCC BAA-588 / NCTC 13252 / RB50) (Alcaligenes bronchisepticus) protein is Large ribosomal subunit protein bL12.